The primary structure comprises 387 residues: Galanin receptor type 2 (387 aa).

Residues 1–28 (MNVSGCPGAGNASQAGGGGGWHPEAVIV) lie on the Extracellular side of the membrane. 2 N-linked (GlcNAc...) asparagine glycosylation sites follow: asparagine 2 and asparagine 11. A helical membrane pass occupies residues 29–49 (PLLFALIFLVGTVGNTLVLAV). Over 50–60 (LLRGGQAVSTT) the chain is Cytoplasmic. The helical transmembrane segment at 61 to 81 (NLFILNLGVADLCFILCCVPF) threads the bilayer. At 82–99 (QATIYTLDGWVFGSLLCK) the chain is on the extracellular side. Cysteine 98 and cysteine 175 are joined by a disulfide. The helical transmembrane segment at 100–121 (AVHFLIFLTMHASSFTLAAVSL) threads the bilayer. Over 122–141 (DRYLAIRYPLHSRELRTPRN) the chain is Cytoplasmic. The helical transmembrane segment at 142 to 162 (ALAAIGLIWGLSLLFSGPYLS) threads the bilayer. Residues 163-187 (YYRQSQLANLTVCHPAWSAPRRRAM) are Extracellular-facing. Residues 188–208 (DICTFVFSYLLPVLVLGLTYA) traverse the membrane as a helical segment. Residues 209 to 237 (RTLRYLWRAVDPVAAGSGARRAKRKVTRM) are Cytoplasmic-facing. A helical transmembrane segment spans residues 238-258 (ILIVAALFCLCWMPHHALILC). The Extracellular segment spans residues 259 to 260 (VW). Residues 261–281 (FGQFPLTRATYALRILSHLVS) form a helical membrane-spanning segment. The Cytoplasmic segment spans residues 282-387 (YANSCVNPIV…GDSILTVDVA (106 aa)).

The protein belongs to the G-protein coupled receptor 1 family. As to expression, expressed abundantly within the central nervous system in both hypothalamus and hippocampus. In peripheral tissues, the strongest expression was observed in heart, kidney, liver, and small intestine.

The protein localises to the cell membrane. Its function is as follows. Receptor for the hormone galanin and GALP. Receptor for the hormone spexin-1. The activity of this receptor is mediated by G proteins that activate the phospholipase C/protein kinase C pathway (via G(q)) and that inhibit adenylyl cyclase (via G(i)). This Homo sapiens (Human) protein is Galanin receptor type 2 (GALR2).